Consider the following 163-residue polypeptide: Jun dimerization protein 2 (163 aa).

2 disordered regions span residues 1–20 and 58–89; these read MMPG…PGLG and GKRP…AARC. K65 participates in a covalent cross-link: Glycyl lysine isopeptide (Lys-Gly) (interchain with G-Cter in SUMO2). The bZIP domain maps to 72 to 135; that stretch reads EERRKRRREK…QQLILMLNRH (64 aa). A basic motif region spans residues 74-96; sequence RRKRRREKNKVAAARCRNKKKER. The tract at residues 100-128 is leucine-zipper; that stretch reads LQRESERLELMNAELKTQIEELKQERQQL. Phosphothreonine; by MAPK8 is present on T148.

Belongs to the bZIP family. ATF subfamily. As to quaternary structure, forms a homodimer or heterodimer with JUN, JUNB, JUND, CEBPG and ATF2 thereby inhibiting transactivation by JUN, ATF2 and CEBPG. Binds multiple DNA elements such as cAMP-response element (CRE) and TPA response element (TRE) either as homodimer or heterodimer. Interacts with IRF2BP1. In terms of processing, phosphorylation of Thr-148 by MAPK8 in response to different stress conditions such as, UV irradiation, oxidatives stress and anisomycin treatments. Post-translationally, polyubiquitinated; probably by IRF2BP1.

The protein resides in the nucleus. Its function is as follows. Component of the AP-1 transcription factor that represses transactivation mediated by the Jun family of proteins. Involved in a variety of transcriptional responses associated with AP-1 such as UV-induced apoptosis, cell differentiation, tumorigenesis and antitumogeneris. Can also function as a repressor by recruiting histone deacetylase 3/HDAC3 to the promoter region of JUN. May control transcription via direct regulation of the modification of histones and the assembly of chromatin. This Homo sapiens (Human) protein is Jun dimerization protein 2 (JDP2).